The sequence spans 734 residues: MLLWLLLLILTPGREQSGVAPKAVLLLNPPWSTAFKGEKVALICSSISHSLAQGDTYWYHDEKLLKIKHDKIQITEPGNYQCKTRGSSLSDAVHVEFSPDWLILQALHPVFEGDNVILRCQGKDNKNTHQKVYYKDGKQLPNSYNLEKITVNSVSRDNSKYHCTAYRKFYILDIEVTSKPLNIQVQELFLHPVLRASSSTPIEGSPMTLTCETQLSPQRPDVQLQFSLFRDSQTLGLGWSRSPRLQIPAMWTEDSGSYWCEVETVTHSIKKRSLRSQIRVQRVPVSNVNLEIRPTGGQLIEGENMVLICSVAQGSGTVTFSWHKEGRVRSLGRKTQRSLLAELHVLTVKESDAGRYYCAADNVHSPILSTWIRVTVRIPVSHPVLTFRAPRAHTVVGDLLELHCESLRGSPPILYRFYHEDVTLGNSSAPSGGGASFNLSLTAEHSGNYSCDADNGLGAQHSHGVSLRVTVPVSRPVLTLRAPGAQAVVGDLLELHCESLRGSFPILYWFYHEDDTLGNISAHSGGGASFNLSLTTEHSGNYSCEADNGLGAQHSKVVTLNVTGTSRNRTGLTAAGITGLVLSILVLAAAAALLHYARARRKPGGLSATGTSSHSPSECQEPSSSRPSRIDPQEPTHSKPLAPMELEPMYSNVNPGDSNPIYSQIWSIQHTKENSANCPMMHQEHEELTVLYSELKKTHPDDSAGEASSRGRAHEEDDEENYENVPRVLLASDH.

Residues 1 to 17 (MLLWLLLLILTPGREQS) form the signal peptide. The Extracellular segment spans residues 18 to 573 (GVAPKAVLLL…GTSRNRTGLT (556 aa)). Ig-like C2-type domains follow at residues 21-98 (PKAV…VEFS), 99-182 (PDWL…KPLN), 192-270 (PVLR…HSIK), 284-369 (PVSN…PILS), 383-470 (PVLT…LRVT), and 476-563 (PVLT…LNVT). Intrachain disulfides connect Cys-44–Cys-82, Cys-120–Cys-163, Cys-211–Cys-260, Cys-309–Cys-358, Cys-404–Cys-451, and Cys-497–Cys-544. N-linked (GlcNAc...) asparagine glycosylation occurs at Asn-561. The chain crosses the membrane as a helical span at residues 574–594 (AAGITGLVLSILVLAAAAALL). Over 595–734 (HYARARRKPG…VPRVLLASDH (140 aa)) the chain is Cytoplasmic. The segment at 603–655 (PGGLSATGTSSHSPSECQEPSSSRPSRIDPQEPTHSKPLAPMELEPMYSNVNP) is disordered. The span at 608-627 (ATGTSSHSPSECQEPSSSRP) shows a compositional bias: polar residues. The segment covering 628-637 (SRIDPQEPTH) has biased composition (basic and acidic residues). 4 short sequence motifs (ITIM motif) span residues 648-653 (PMYSNV), 660-665 (PIYSQI), 690-695 (VLYSEL), and 720-725 (ENYENV). Residues Tyr-650, Tyr-662, Tyr-692, and Tyr-722 each carry the phosphotyrosine modification. Positions 695–734 (LKKTHPDDSAGEASSRGRAHEEDDEENYENVPRVLLASDH) are disordered.

Interacts (via phosphorylated ITIM motifs) with phosphatases INPP5D, PTPN6 and PTPN11. Interacts (via ITIM motifs) SYK and ZAP70. Interacts with IZUMO1R/JUNO. Interacts (via extracellular domain) with IZUMO1; the interaction replaces IZUMO1R/JUNO as IZUMO1 receptor after adhesion between sperm and egg. Phosphorylated on cytoplasmic tyrosines; required for interaction with protein tyrosine phosphatases and protein tyrosine kinases. In terms of tissue distribution, primarily expressed in secondary lymphoid tissues by mature subsets of B-cells. Low expression on transitional B cells which increases to higher surface expression on mature and memory B-cells with innate-like features (at protein level). Expressed a low levels in naive and germinal center B-cells but also expressed in NK cells (at protein level). Expressed in unfertilized oocytes (at protein level). Expressed in a population of thymically derived naturally occurring regulatory T-cells that exhibits a memory phenotype, specialized in suppressing immune response to self-antigens. Detected in spleen, lymph node, peripheral blood lymphocytes, thymus, bone marrow, kidney, salivary gland, adrenal gland and uterus.

Its subcellular location is the cell membrane. The protein resides in the cell projection. It is found in the microvillus membrane. Promotes TLR9-induced B-cell proliferation, activation and survival but inhibits antibody production and suppresses plasma cell differentiation. Enhances activation of NF-kappa-B and MAPK signaling pathways in TLR9 stimulated B-cells. Has inhibitory potentional on B-cell receptor (BCR)-mediated signaling, possibly through association with SH2 domain-containing phosphatases. Inhibits cell tyrosine phosphorylation, calcium mobilization and activation-induced cell death induced through BCR signaling. Regulatory T-cells expressing FCRL3 exhibit a memory phenotype, are relatively nonresponsive to antigenic stimulation in presence of IL2 and have reduced capacity to suppress the proliferation of effector T-cells. Acts as a human-specific epitope on the cell surface of oocytes (oolemma) and plays a role during sperm-egg adhesion and fusion. Interacts with the IZUMO1-IZUMO1R/JUNO sperm-egg complex and replaces IZUMO1R/JUNO as IZUMO1 receptor during fertilization, thereby permitting species-specific gamete fusion. This is Fc receptor-like protein 3 from Homo sapiens (Human).